The following is a 334-amino-acid chain: NAC domain-containing protein 66 (334 aa).

Residues 11–175 (VPPGFRFHPT…GWVVCRVFKK (165 aa)) form the NAC domain. The DNA-binding element occupies 111–181 (IGMRKTLVFY…VFKKNNLCKN (71 aa)).

In terms of tissue distribution, mostly expressed in anthers. Also present in pollen, base of siliques and inflorescence stems.

It is found in the nucleus. Transcription activator of genes involved in biosynthesis of secondary walls. Together with NST1, required for the secondary cell wall thickening of the anther endocethium, which is necessary for anther dehiscence. May also regulate the secondary cell wall lignification of other tissues such as tracheary elements. This is NAC domain-containing protein 66 (NAC066) from Arabidopsis thaliana (Mouse-ear cress).